A 314-amino-acid chain; its full sequence is Homoserine O-acetyltransferase (314 aa).

C142 acts as the Acyl-thioester intermediate in catalysis. Substrate is bound by residues K163 and S192. H235 functions as the Proton acceptor in the catalytic mechanism. Residue E237 is part of the active site. R249 provides a ligand contact to substrate.

This sequence belongs to the MetA family.

It localises to the cytoplasm. It carries out the reaction L-homoserine + acetyl-CoA = O-acetyl-L-homoserine + CoA. It participates in amino-acid biosynthesis; L-methionine biosynthesis via de novo pathway; O-acetyl-L-homoserine from L-homoserine: step 1/1. Transfers an acetyl group from acetyl-CoA to L-homoserine, forming acetyl-L-homoserine. In Streptococcus thermophilus (strain ATCC BAA-491 / LMD-9), this protein is Homoserine O-acetyltransferase.